The sequence spans 115 residues: Parathyroid hormone (115 aa).

The N-terminal stretch at 1–25 (MMSAKDMVKVMIVMLAICFLARSDG) is a signal peptide. Positions 26–31 (KSVKKR) are excised as a propeptide. Positions 51–69 (RVEWLRKKLQDVHNFVALG) are important for receptor binding. A disordered region spans residues 77-99 (GSSQRPRKKEDNVLVESHQKSLG). Positions 84–99 (KKEDNVLVESHQKSLG) are enriched in basic and acidic residues.

It belongs to the parathyroid hormone family. Interacts with PTH1R (via N-terminal extracellular domain).

Its subcellular location is the secreted. In terms of biological role, parathyroid hormone elevates calcium level by dissolving the salts in bone and preventing their renal excretion. Acts by binding to its receptor, PTH1R, activating G protein-coupled receptor signaling. Stimulates [1-14C]-2-deoxy-D-glucose (2DG) transport and glycogen synthesis in osteoblastic cells. The polypeptide is Parathyroid hormone (Bos taurus (Bovine)).